The following is a 149-amino-acid chain: Endoribonuclease YbeY (149 aa).

Residues His-116, His-120, and His-126 each contribute to the Zn(2+) site.

It belongs to the endoribonuclease YbeY family. Requires Zn(2+) as cofactor.

It localises to the cytoplasm. In terms of biological role, single strand-specific metallo-endoribonuclease involved in late-stage 70S ribosome quality control and in maturation of the 3' terminus of the 16S rRNA. This chain is Endoribonuclease YbeY, found in Nocardioides sp. (strain ATCC BAA-499 / JS614).